We begin with the raw amino-acid sequence, 388 residues long: Cobalt-precorrin-5B C(1)-methyltransferase (388 aa).

It belongs to the CbiD family.

The catalysed reaction is Co-precorrin-5B + S-adenosyl-L-methionine = Co-precorrin-6A + S-adenosyl-L-homocysteine. It participates in cofactor biosynthesis; adenosylcobalamin biosynthesis; cob(II)yrinate a,c-diamide from sirohydrochlorin (anaerobic route): step 6/10. In terms of biological role, catalyzes the methylation of C-1 in cobalt-precorrin-5B to form cobalt-precorrin-6A. This is Cobalt-precorrin-5B C(1)-methyltransferase from Rubrobacter xylanophilus (strain DSM 9941 / JCM 11954 / NBRC 16129 / PRD-1).